The following is a 223-amino-acid chain: Ras-related protein Rab-37 (223 aa).

Residues M1–S23 are disordered. T2 carries the N-acetylthreonine modification. Positions 38, 39, 40, 41, 42, 43, 44, and 62 each coordinate GTP. Mg(2+) is bound at residue T43. 2 consecutive short sequence motifs (switch) follow at residues G52–F67 and D85–D102. Mg(2+)-binding residues include T62 and D85. Residues G88, N143, K144, D146, M147, S173, A174, and K175 each coordinate GTP. S-geranylgeranyl cysteine attachment occurs at residues C219 and C220. C220 bears the Cysteine methyl ester mark. A propeptide spans S221–M223 (removed in mature form).

The protein belongs to the small GTPase superfamily. Rab family. In terms of assembly, interacts with RIMS1. Interacts (in GDP-bound form) with RPGR, RPGR functions as guanine exchange factor (GEF). Requires Mg(2+) as cofactor.

It localises to the cytoplasmic vesicle. The protein localises to the cell projection. It is found in the cilium. It catalyses the reaction GTP + H2O = GDP + phosphate + H(+). Regulated by guanine nucleotide exchange factors (GEFs) including RPGR which promote the exchange of bound GDP for free GTP. Regulated by GTPase activating proteins (GAPs) which increase the GTP hydrolysis activity. Inhibited by GDP dissociation inhibitors (GDIs). In terms of biological role, the small GTPases Rab are key regulators of intracellular membrane trafficking, from the formation of transport vesicles to their fusion with membranes. Rabs cycle between an inactive GDP-bound form and an active GTP-bound form that is able to recruit to membranes different sets of downstream effectors directly responsible for vesicle formation, movement, tethering and fusion. Acts as an organizer for autophagosome biogenesis in a GTP-dependent manner. Involved in retinal homeostasis by autophagy regulation. The sequence is that of Ras-related protein Rab-37 from Homo sapiens (Human).